The chain runs to 158 residues: Protein-export protein SecB (158 aa).

This sequence belongs to the SecB family. In terms of assembly, homotetramer, a dimer of dimers. One homotetramer interacts with 1 SecA dimer.

The protein resides in the cytoplasm. Its function is as follows. One of the proteins required for the normal export of preproteins out of the cell cytoplasm. It is a molecular chaperone that binds to a subset of precursor proteins, maintaining them in a translocation-competent state. It also specifically binds to its receptor SecA. The sequence is that of Protein-export protein SecB from Rhodopseudomonas palustris (strain BisB5).